The following is a 438-amino-acid chain: Aspartate--tRNA(Asp) ligase (438 aa).

Glu-170 is a binding site for L-aspartate. Positions 192–195 (QLYK) are aspartate. An L-aspartate-binding site is contributed by Arg-214. ATP contacts are provided by residues 214–216 (RAE), 222–224 (RHL), and Glu-361. The Mg(2+) site is built by Glu-361 and Ser-364. The L-aspartate site is built by Ser-364 and Arg-368. 409 to 412 (GAER) contributes to the ATP binding site.

This sequence belongs to the class-II aminoacyl-tRNA synthetase family. Type 2 subfamily. Homodimer. Mg(2+) is required as a cofactor.

It is found in the cytoplasm. The catalysed reaction is tRNA(Asp) + L-aspartate + ATP = L-aspartyl-tRNA(Asp) + AMP + diphosphate. Functionally, catalyzes the attachment of L-aspartate to tRNA(Asp) in a two-step reaction: L-aspartate is first activated by ATP to form Asp-AMP and then transferred to the acceptor end of tRNA(Asp). Is specific for tRNA(Asp) since it aspartylates tRNA(Asn) 3 orders of magnitude less efficiently than tRNA(Asp). The polypeptide is Aspartate--tRNA(Asp) ligase (Thermococcus kodakarensis (strain ATCC BAA-918 / JCM 12380 / KOD1) (Pyrococcus kodakaraensis (strain KOD1))).